The sequence spans 110 residues: Hydrogenase maturation factor HypA (110 aa).

His2 provides a ligand contact to Ni(2+). Zn(2+) is bound by residues Cys73, Cys76, Cys87, and Cys89.

It belongs to the HypA/HybF family.

Functionally, involved in the maturation of [NiFe] hydrogenases. Required for nickel insertion into the metal center of the hydrogenase. The polypeptide is Hydrogenase maturation factor HypA (Archaeoglobus fulgidus (strain ATCC 49558 / DSM 4304 / JCM 9628 / NBRC 100126 / VC-16)).